We begin with the raw amino-acid sequence, 399 residues long: Formate-dependent phosphoribosylglycinamide formyltransferase (399 aa).

N(1)-(5-phospho-beta-D-ribosyl)glycinamide-binding positions include 21 to 22 (EL) and glutamate 81. Residues arginine 114, lysine 156, 161 to 166 (SSGKGQ), 196 to 199 (EGFI), and glutamate 204 each bind ATP. The region spanning 119–314 (RLAAEELGLP…EFELHARAIL (196 aa)) is the ATP-grasp domain. The Mg(2+) site is built by glutamate 273 and glutamate 285. N(1)-(5-phospho-beta-D-ribosyl)glycinamide contacts are provided by residues aspartate 292, lysine 361, and 368 to 369 (RR). Residues 370–399 (MGVAVANGESTDQARERAKLAASKVRPTRT) are disordered.

Belongs to the PurK/PurT family. As to quaternary structure, homodimer.

The catalysed reaction is N(1)-(5-phospho-beta-D-ribosyl)glycinamide + formate + ATP = N(2)-formyl-N(1)-(5-phospho-beta-D-ribosyl)glycinamide + ADP + phosphate + H(+). The protein operates within purine metabolism; IMP biosynthesis via de novo pathway; N(2)-formyl-N(1)-(5-phospho-D-ribosyl)glycinamide from N(1)-(5-phospho-D-ribosyl)glycinamide (formate route): step 1/1. In terms of biological role, involved in the de novo purine biosynthesis. Catalyzes the transfer of formate to 5-phospho-ribosyl-glycinamide (GAR), producing 5-phospho-ribosyl-N-formylglycinamide (FGAR). Formate is provided by PurU via hydrolysis of 10-formyl-tetrahydrofolate. In Dechloromonas aromatica (strain RCB), this protein is Formate-dependent phosphoribosylglycinamide formyltransferase.